Consider the following 293-residue polypeptide: uncharacterized protein (293 aa).

Residues 55 to 77 traverse the membrane as a helical segment; the sequence is IVLAKEIFAVAFFSLGMSCLLMA.

It is found in the membrane. This is an uncharacterized protein from Caenorhabditis elegans.